Here is a 404-residue protein sequence, read N- to C-terminus: Cysteine desulfurase IscS (404 aa).

Pyridoxal 5'-phosphate-binding positions include 75 to 76 (AT), N155, Q183, and 203 to 205 (SGH). K206 carries the N6-(pyridoxal phosphate)lysine modification. T243 is a binding site for pyridoxal 5'-phosphate. Catalysis depends on C328, which acts as the Cysteine persulfide intermediate. C328 provides a ligand contact to [2Fe-2S] cluster.

The protein belongs to the class-V pyridoxal-phosphate-dependent aminotransferase family. NifS/IscS subfamily. In terms of assembly, homodimer. Forms a heterotetramer with IscU, interacts with other sulfur acceptors. Pyridoxal 5'-phosphate serves as cofactor.

Its subcellular location is the cytoplasm. The catalysed reaction is (sulfur carrier)-H + L-cysteine = (sulfur carrier)-SH + L-alanine. It functions in the pathway cofactor biosynthesis; iron-sulfur cluster biosynthesis. In terms of biological role, master enzyme that delivers sulfur to a number of partners involved in Fe-S cluster assembly, tRNA modification or cofactor biosynthesis. Catalyzes the removal of elemental sulfur atoms from cysteine to produce alanine. Functions as a sulfur delivery protein for Fe-S cluster synthesis onto IscU, an Fe-S scaffold assembly protein, as well as other S acceptor proteins. The polypeptide is Cysteine desulfurase IscS (Pectobacterium carotovorum subsp. carotovorum (strain PC1)).